The primary structure comprises 117 residues: DNA-binding protein DDB_G0278111 (117 aa).

Positions 1–40 (MSSEKEIQQQLSQMQGQGFDPEAQQRQEAQRQEANERRQG) are disordered. Residues 8–22 (QQQLSQMQGQGFDPE) show a composition bias toward low complexity. The segment covering 23–39 (AQQRQEAQRQEANERRQ) has biased composition (basic and acidic residues).

This sequence belongs to the PDCD5 family.

This Dictyostelium discoideum (Social amoeba) protein is DNA-binding protein DDB_G0278111.